The following is an 86-amino-acid chain: Large ribosomal subunit protein bL27 (86 aa).

The protein belongs to the bacterial ribosomal protein bL27 family.

The protein is Large ribosomal subunit protein bL27 of Christiangramia forsetii (strain DSM 17595 / CGMCC 1.15422 / KT0803) (Gramella forsetii).